A 363-amino-acid polypeptide reads, in one-letter code: UDP-3-O-acylglucosamine N-acyltransferase (363 aa).

Histidine 252 functions as the Proton acceptor in the catalytic mechanism.

Belongs to the transferase hexapeptide repeat family. LpxD subfamily. Homotrimer.

The enzyme catalyses a UDP-3-O-[(3R)-3-hydroxyacyl]-alpha-D-glucosamine + a (3R)-hydroxyacyl-[ACP] = a UDP-2-N,3-O-bis[(3R)-3-hydroxyacyl]-alpha-D-glucosamine + holo-[ACP] + H(+). Its pathway is bacterial outer membrane biogenesis; LPS lipid A biosynthesis. In terms of biological role, catalyzes the N-acylation of UDP-3-O-acylglucosamine using 3-hydroxyacyl-ACP as the acyl donor. Is involved in the biosynthesis of lipid A, a phosphorylated glycolipid that anchors the lipopolysaccharide to the outer membrane of the cell. This Cupriavidus necator (strain ATCC 17699 / DSM 428 / KCTC 22496 / NCIMB 10442 / H16 / Stanier 337) (Ralstonia eutropha) protein is UDP-3-O-acylglucosamine N-acyltransferase.